A 63-amino-acid polypeptide reads, in one-letter code: Sarcotoxin-1B (63 aa).

The N-terminal stretch at 1 to 23 (MNFNKVFIFVALILAVFAGQSQA) is a signal peptide. At Arg-62 the chain carries Arginine amide.

The protein belongs to the cecropin family.

The protein localises to the secreted. In terms of biological role, sarcotoxins, which are potent bactericidal proteins, are produced in response to injury. They are cytotoxic to both Gram-positive and Gram-negative bacteria. The polypeptide is Sarcotoxin-1B (Sarcophaga peregrina (Flesh fly)).